The sequence spans 594 residues: ATP-dependent RNA helicase DBP9 (594 aa).

The Q motif signature appears at 15–43 (SSFDSFHLDSRLSQAIRSIGFKHPTLIQS). One can recognise a Helicase ATP-binding domain in the interval 47–229 (PLALQEKRDI…QQFCRSPAIL (183 aa)). ATP is bound at residue 60–67 (ASTGSGKT). Residues 175-178 (DEVD) carry the DEAD box motif. Residues 242–474 (KLIQYYVKVG…PYNFDIKQVE (233 aa)) form the Helicase C-terminal domain. A disordered region spans residues 562–594 (PFHKNSHRKNGRVVKKKGNVQRKGKSDPLKSFK). A compositionally biased stretch (basic residues) spans 565–584 (KNSHRKNGRVVKKKGNVQRK). Basic and acidic residues predominate over residues 585–594 (GKSDPLKSFK).

It belongs to the DEAD box helicase family. DDX56/DBP9 subfamily.

It localises to the nucleus. The protein resides in the nucleolus. The catalysed reaction is ATP + H2O = ADP + phosphate + H(+). ATP-binding RNA helicase involved in the biogenesis of 60S ribosomal subunits and is required for the normal formation of 25S and 5.8S rRNAs. The protein is ATP-dependent RNA helicase DBP9 (DBP9) of Kluyveromyces lactis (strain ATCC 8585 / CBS 2359 / DSM 70799 / NBRC 1267 / NRRL Y-1140 / WM37) (Yeast).